The sequence spans 489 residues: Tripartite motif-containing protein 10 (489 aa).

The segment at 16–61 adopts an RING-type zinc-finger fold; it reads CPICQGTLREPVTIDCGHNFCRGCLTRYCEIPGPESEESLSCPLCK. Residues 94–135 form a B box-type zinc finger; that stretch reads EVEDACPEHGEKIYFFCEEDEAQLCVVCRETGQHGAHTVRFL. The Zn(2+) site is built by Cys99, His102, Cys121, and His127. The stretch at 144 to 180 forms a coiled coil; it reads EQIQKCLVCLRKEREEIQETQSRENKRIQVLLTQVAT. The 195-residue stretch at 292–486 folds into the B30.2/SPRY domain; the sequence is QEMKTFLEKL…FSLSCQEGAV (195 aa).

It belongs to the TRIM/RBCC family. In terms of assembly, interacts with IFNAR1; this interaction prevents association of IFNAR1 with TYK2. As to expression, expressed in embryonic liver.

The protein resides in the cytoplasm. Functionally, E3 ligase that plays an essential role in the differentiation and survival of terminal erythroid cells. May directly bind to PTEN and promote its ubiquitination, resulting in its proteasomal degradation and activation of hypertrophic signaling. In addition, plays a role in immune response regulation by repressing the phosphorylation of STAT1 and STAT2 in the interferon/JAK/STAT signaling pathway independent of its E3 ligase activity. Mechanistically, interacts with the intracellular domain of IFNAR1 and thereby inhibits the association between TYK2 and IFNAR1. The sequence is that of Tripartite motif-containing protein 10 (Trim10) from Mus musculus (Mouse).